We begin with the raw amino-acid sequence, 89 residues long: Small ribosomal subunit protein uS14A (89 aa).

It belongs to the universal ribosomal protein uS14 family. In terms of assembly, part of the 30S ribosomal subunit. Contacts proteins S3 and S10.

Functionally, binds 16S rRNA, required for the assembly of 30S particles and may also be responsible for determining the conformation of the 16S rRNA at the A site. The polypeptide is Small ribosomal subunit protein uS14A (Listeria monocytogenes serovar 1/2a (strain ATCC BAA-679 / EGD-e)).